Here is a 243-residue protein sequence, read N- to C-terminus: Phosphoribosylaminoimidazole-succinocarboxamide synthase (243 aa).

Belongs to the SAICAR synthetase family.

It carries out the reaction 5-amino-1-(5-phospho-D-ribosyl)imidazole-4-carboxylate + L-aspartate + ATP = (2S)-2-[5-amino-1-(5-phospho-beta-D-ribosyl)imidazole-4-carboxamido]succinate + ADP + phosphate + 2 H(+). The protein operates within purine metabolism; IMP biosynthesis via de novo pathway; 5-amino-1-(5-phospho-D-ribosyl)imidazole-4-carboxamide from 5-amino-1-(5-phospho-D-ribosyl)imidazole-4-carboxylate: step 1/2. In Prochlorococcus marinus (strain MIT 9211), this protein is Phosphoribosylaminoimidazole-succinocarboxamide synthase.